The chain runs to 616 residues: Dihydroxy-acid dehydratase (616 aa).

A Mg(2+)-binding site is contributed by aspartate 81. Cysteine 122 lines the [2Fe-2S] cluster pocket. Mg(2+) is bound by residues aspartate 123 and lysine 124. Lysine 124 is modified (N6-carboxylysine). Cysteine 196 contacts [2Fe-2S] cluster. Position 496 (glutamate 496) interacts with Mg(2+). Serine 522 (proton acceptor) is an active-site residue.

Belongs to the IlvD/Edd family. In terms of assembly, homodimer. It depends on [2Fe-2S] cluster as a cofactor. The cofactor is Mg(2+).

The catalysed reaction is (2R)-2,3-dihydroxy-3-methylbutanoate = 3-methyl-2-oxobutanoate + H2O. It carries out the reaction (2R,3R)-2,3-dihydroxy-3-methylpentanoate = (S)-3-methyl-2-oxopentanoate + H2O. Its pathway is amino-acid biosynthesis; L-isoleucine biosynthesis; L-isoleucine from 2-oxobutanoate: step 3/4. The protein operates within amino-acid biosynthesis; L-valine biosynthesis; L-valine from pyruvate: step 3/4. Functionally, functions in the biosynthesis of branched-chain amino acids. Catalyzes the dehydration of (2R,3R)-2,3-dihydroxy-3-methylpentanoate (2,3-dihydroxy-3-methylvalerate) into 2-oxo-3-methylpentanoate (2-oxo-3-methylvalerate) and of (2R)-2,3-dihydroxy-3-methylbutanoate (2,3-dihydroxyisovalerate) into 2-oxo-3-methylbutanoate (2-oxoisovalerate), the penultimate precursor to L-isoleucine and L-valine, respectively. This chain is Dihydroxy-acid dehydratase, found in Streptomyces griseus subsp. griseus (strain JCM 4626 / CBS 651.72 / NBRC 13350 / KCC S-0626 / ISP 5235).